Here is a 214-residue protein sequence, read N- to C-terminus: uncharacterized protein (214 aa).

The next 5 membrane-spanning stretches (helical) occupy residues 18–38 (LLLLCIGGFYALGVSLSNTFV), 51–71 (DLALYNLAVVTMQPLTFIVAG), 80–100 (ILVLRLGVSCLAVFFVTVLLV), 108–128 (LLVLGALLGVGYGFYWLAFNV), and 145–165 (FFGVLTSSAGMIGPIAAGYII).

The protein localises to the cell membrane. This is an uncharacterized protein from Geobacillus stearothermophilus (Bacillus stearothermophilus).